A 959-amino-acid chain; its full sequence is Mitogen-activated protein kinase kinase kinase 13 (959 aa).

The segment at 1–47 (MANPQEHLSCSSLPHLPLTENKTSGGRNELAAMGNHPSPKLPEDPQE) is disordered. The segment covering 7-18 (HLSCSSLPHLPL) has biased composition (low complexity). Residues 167–408 (ISELQWLGSG…FRQTLMHLDI (242 aa)) form the Protein kinase domain. ATP contacts are provided by residues 173–181 (LGSGAQGAV) and K194. D278 serves as the catalytic Proton acceptor. Leucine-zipper stretches follow at residues 432-453 (VKKH…DEEL) and 485-506 (LSAI…EQAV). 4 disordered regions span residues 533-599 (KRKG…GSHS), 739-828 (GSLD…RQRP), 842-902 (SSEN…LSDK), and 927-959 (NPVQ…SATW). Residues 566 to 577 (SPLSGSPKMSTA) show a composition bias toward polar residues. Basic residues predominate over residues 581–593 (SRYRSKPRHRRGN). 2 stretches are compositionally biased toward polar residues: residues 754-774 (DLSS…SERT) and 780-790 (SGCQSGISHQF). A compositionally biased stretch (acidic residues) spans 808–820 (DSSEEEGEVDSEV). Over residues 866-876 (SANRRQDRLAE) the composition is skewed to basic and acidic residues. Residues 934-943 (SDCDSSEGEC) show a composition bias toward acidic residues. Polar residues predominate over residues 947-959 (TVRTSKNYSSATW).

Belongs to the protein kinase superfamily. STE Ser/Thr protein kinase family. MAP kinase kinase kinase subfamily. In terms of assembly, homodimer; forms dimers through the leucine-zipper motif. Interacts with the C-terminus of MAPK8IP1 through the kinase catalytic domain. Binds PRDX3. Associates with the IKK complex through the kinase domain. It depends on Mg(2+) as a cofactor. Autophosphorylated on serine and threonine residues.

It is found in the cytoplasm. The protein resides in the membrane. The enzyme catalyses L-seryl-[protein] + ATP = O-phospho-L-seryl-[protein] + ADP + H(+). It catalyses the reaction L-threonyl-[protein] + ATP = O-phospho-L-threonyl-[protein] + ADP + H(+). With respect to regulation, activated by autophosphorylation and homodimerization. In terms of biological role, activates the JUN N-terminal pathway through activation of the MAP kinase kinase MAP2K7. Acts synergistically with PRDX3 to regulate the activation of NF-kappa-B in the cytosol. This activation is kinase-dependent and involves activating the IKK complex, the IKBKB-containing complex that phosphorylates inhibitors of NF-kappa-B. This is Mitogen-activated protein kinase kinase kinase 13 (Map3k13) from Mus musculus (Mouse).